Consider the following 486-residue polypeptide: Surface lipoprotein assembly modifier (486 aa).

Residues Met-1–Ala-29 form the signal peptide. Residues Lys-30–Asn-197 form an N-terminal domain region. The segment at Gln-198–Phe-486 is C-terminal probable beta barrel. 14 consecutive transmembrane segments (beta stranded) span residues Trp-199–Asn-209, Gly-237–Pro-248, Phe-253–Asn-262, Thr-276–Gln-286, Val-290–Lys-300, Leu-320–Leu-330, Trp-334–Glu-344, Tyr-358–Leu-367, Phe-373–Arg-382, Lys-395–Asp-404, Ile-409–Asn-419, Tyr-437–Arg-446, Leu-453–Lys-463, and Asn-476–Phe-486.

This sequence belongs to the Slam family.

It localises to the cell outer membrane. Required for correct export to the cell surface of some cell outer membrane lipoproteins (tested with TpbP) upon heterologous expression in E.coli and probably also in Haemophilus. The polypeptide is Surface lipoprotein assembly modifier (Haemophilus influenzae (strain 86-028NP)).